The following is a 194-amino-acid chain: Molybdenum cofactor guanylyltransferase (194 aa).

GTP is bound by residues leucine 12–glycine 14, lysine 25, asparagine 53, aspartate 71, and aspartate 101. Aspartate 101 contacts Mg(2+).

This sequence belongs to the MobA family. As to quaternary structure, monomer. Requires Mg(2+) as cofactor.

It localises to the cytoplasm. It carries out the reaction Mo-molybdopterin + GTP + H(+) = Mo-molybdopterin guanine dinucleotide + diphosphate. In terms of biological role, transfers a GMP moiety from GTP to Mo-molybdopterin (Mo-MPT) cofactor (Moco or molybdenum cofactor) to form Mo-molybdopterin guanine dinucleotide (Mo-MGD) cofactor. This Escherichia coli O6:H1 (strain CFT073 / ATCC 700928 / UPEC) protein is Molybdenum cofactor guanylyltransferase.